Here is a 772-residue protein sequence, read N- to C-terminus: Heat shock protein 88 (772 aa).

2 disordered regions span residues 496 to 519 (TAAPAETPAETPANGEAAKPAEEK) and 729 to 772 (LGKP…DILD). Residues 497 to 513 (AAPAETPAETPANGEAA) show a composition bias toward low complexity. Residues 735–772 (KPVEVPKEEPKDTPMESKDAPAEEPVATKDQKMDDILD) show a composition bias toward basic and acidic residues.

The protein belongs to the heat shock protein 70 family.

Functionally, may function in protein folding and assembly, and disassembly of protein complexes. The polypeptide is Heat shock protein 88 (hspH) (Dictyostelium discoideum (Social amoeba)).